The sequence spans 174 residues: Crossover junction endodeoxyribonuclease RuvC (174 aa).

Residues D8, E67, and D139 contribute to the active site. Mg(2+)-binding residues include D8, E67, and D139.

This sequence belongs to the RuvC family. In terms of assembly, homodimer which binds Holliday junction (HJ) DNA. The HJ becomes 2-fold symmetrical on binding to RuvC with unstacked arms; it has a different conformation from HJ DNA in complex with RuvA. In the full resolvosome a probable DNA-RuvA(4)-RuvB(12)-RuvC(2) complex forms which resolves the HJ. Mg(2+) is required as a cofactor.

The protein resides in the cytoplasm. It catalyses the reaction Endonucleolytic cleavage at a junction such as a reciprocal single-stranded crossover between two homologous DNA duplexes (Holliday junction).. Functionally, the RuvA-RuvB-RuvC complex processes Holliday junction (HJ) DNA during genetic recombination and DNA repair. Endonuclease that resolves HJ intermediates. Cleaves cruciform DNA by making single-stranded nicks across the HJ at symmetrical positions within the homologous arms, yielding a 5'-phosphate and a 3'-hydroxyl group; requires a central core of homology in the junction. The consensus cleavage sequence is 5'-(A/T)TT(C/G)-3'. Cleavage occurs on the 3'-side of the TT dinucleotide at the point of strand exchange. HJ branch migration catalyzed by RuvA-RuvB allows RuvC to scan DNA until it finds its consensus sequence, where it cleaves and resolves the cruciform DNA. The polypeptide is Crossover junction endodeoxyribonuclease RuvC (Pseudomonas paraeruginosa (strain DSM 24068 / PA7) (Pseudomonas aeruginosa (strain PA7))).